Here is a 245-residue protein sequence, read N- to C-terminus: 1-(5-phosphoribosyl)-5-[(5-phosphoribosylamino)methylideneamino] imidazole-4-carboxamide isomerase (245 aa).

The active-site Proton acceptor is the aspartate 7. Residue aspartate 129 is the Proton donor of the active site.

The protein belongs to the HisA/HisF family.

Its subcellular location is the cytoplasm. It catalyses the reaction 1-(5-phospho-beta-D-ribosyl)-5-[(5-phospho-beta-D-ribosylamino)methylideneamino]imidazole-4-carboxamide = 5-[(5-phospho-1-deoxy-D-ribulos-1-ylimino)methylamino]-1-(5-phospho-beta-D-ribosyl)imidazole-4-carboxamide. It functions in the pathway amino-acid biosynthesis; L-histidine biosynthesis; L-histidine from 5-phospho-alpha-D-ribose 1-diphosphate: step 4/9. The protein is 1-(5-phosphoribosyl)-5-[(5-phosphoribosylamino)methylideneamino] imidazole-4-carboxamide isomerase of Escherichia coli O6:K15:H31 (strain 536 / UPEC).